A 309-amino-acid polypeptide reads, in one-letter code: Serine/threonine-protein phosphatase 2A catalytic subunit alpha isoform (309 aa).

Residues aspartate 57, histidine 59, aspartate 85, and asparagine 117 each contribute to the Mn(2+) site. Zn(2+) is bound by residues aspartate 57, histidine 59, and aspartate 85. Fe(3+)-binding residues include aspartate 85 and asparagine 117. Histidine 118 functions as the Proton donor in the catalytic mechanism. Mn(2+) is bound by residues histidine 167 and histidine 241. Residues histidine 167 and histidine 241 each contribute to the Fe(3+) site. Tyrosine 307 bears the Phosphotyrosine mark. Leucine 309 carries the leucine methyl ester modification.

Belongs to the PPP phosphatase family. PP-1 subfamily. PP2A consists of a common heterodimeric core enzyme composed of PPP2CA, a 36 kDa catalytic subunit (subunit C), and PPP2R1A, a 65 kDa constant regulatory subunit (PR65 or subunit A), that associates with a variety of regulatory subunits. Proteins that associate with the core dimer include three families of regulatory subunits B (the R2/B/PR55/B55, R3/B''/PR72/PR130/PR59 and R5/B'/B56 families), the 48 kDa variable regulatory subunit, viral proteins, and cell signaling molecules. Interacts with the PP2A A subunit PPP2R1A. Interacts with the regulatory subunit PPP2R2A. Interacts (via C-terminus) with PTPA. Interacts with NXN; the interaction is direct. Interacts with KCTD20. Interacts with BTBD10. Interacts with SGO1 and SGO2. Interacts with RAF1. Interaction with IGBP1 protects unassembled PPP2CA from degradative ubiquitination. Interacts with GSK3B (via C2 domain). Interacts with MFHAS1; retains PPP2CA into the cytoplasm and excludes it from the nucleus. Interacts with PABIR1/FAM122A. Interacts with ADCY8; interaction is phosphatase activity-dependent; antagonizes interaction between ADCY8 and calmodulin. Interacts with CRTC3 (when phosphorylated at 'Ser-391'). Interacts with SPRY2; the interaction is inhibited by TESK1 interaction with SPRY2, possibly by vesicular sequestration of SPRY2. Interacts with TRAF3IP3. Interacts with AMBRA1 (via PxP motifs); enhancing interaction between PPP2CA and MYC or FOXO3. Forms a complex with AMBRA1 and BECN1; AMBRA1 and BECN1 components of the complex regulate MYC stability via different pathways. Part of the core of STRIPAK complexes composed of PP2A catalytic and scaffolding subunits, the striatins (PP2A regulatory subunits), the striatin-associated proteins MOB4, STRIP1 and STRIP2, PDCD10 and members of the STE20 kinases, such as STK24 and STK26. Phosphatase component of the Integrator-PP2A (INTAC) complex, composed of the Integrator core complex and protein phosphatase 2A subunits PPP2CA and PPP2R1A. Mn(2+) serves as cofactor. Requires Fe(3+) as cofactor. It depends on Zn(2+) as a cofactor. In terms of processing, reversibly methyl esterified on Leu-309 by leucine carboxyl methyltransferase 1 (LCMT1) and protein phosphatase methylesterase 1 (PPME1). Carboxyl methylation influences the affinity of the catalytic subunit for the different regulatory subunits, thereby modulating the PP2A holoenzyme's substrate specificity, enzyme activity and cellular localization. Post-translationally, phosphorylation of either threonine (by autophosphorylation-activated protein kinase) or tyrosine results in inactivation of the phosphatase. Auto-dephosphorylation has been suggested as a mechanism for reactivation. Polyubiquitinated, leading to its degradation by the proteasome.

It is found in the cytoplasm. Its subcellular location is the nucleus. The protein resides in the chromosome. The protein localises to the centromere. It localises to the cytoskeleton. It is found in the spindle pole. The catalysed reaction is O-phospho-L-seryl-[protein] + H2O = L-seryl-[protein] + phosphate. It carries out the reaction O-phospho-L-threonyl-[protein] + H2O = L-threonyl-[protein] + phosphate. Its activity is regulated as follows. Inhibited by the interaction between PPP2R2A and ARPP19; this inhibition is enhanced when ARPP19 is phosphorylated. Inhibited by the interaction between PPP2R2A and PABIR1/FAM122A. Functionally, catalytic subunit of protein phosphatase 2A (PP2A), a serine/threonine phosphatase involved in the regulation of a wide variety of enzymes, signal transduction pathways, and cellular events. PP2A is the major phosphatase for microtubule-associated proteins (MAPs). PP2A can modulate the activity of phosphorylase B kinase casein kinase 2, mitogen-stimulated S6 kinase, and MAP-2 kinase. Cooperates with SGO2 to protect centromeric cohesin from separase-mediated cleavage in oocytes specifically during meiosis I. Can dephosphorylate various proteins, such as SV40 large T antigen, AXIN1, p53/TP53, PIM3, WEE1. Activates RAF1 by dephosphorylating it at 'Ser-259'. Mediates dephosphorylation of WEE1, preventing its ubiquitin-mediated proteolysis, increasing WEE1 protein levels, and promoting the G2/M checkpoint. Mediates dephosphorylation of MYC; promoting its ubiquitin-mediated proteolysis: interaction with AMBRA1 enhances interaction between PPP2CA and MYC. Mediates dephosphorylation of FOXO3; promoting its stabilization: interaction with AMBRA1 enhances interaction between PPP2CA and FOXO3. Catalyzes dephosphorylation of the pyrin domain of NLRP3, promoting assembly of the NLRP3 inflammasome. Together with RACK1 adapter, mediates dephosphorylation of AKT1 at 'Ser-473', preventing AKT1 activation and AKT-mTOR signaling pathway. Dephosphorylation of AKT1 is essential for regulatory T-cells (Treg) homeostasis and stability. Catalyzes dephosphorylation of PIM3, promotinh PIM3 ubiquitination and proteasomal degradation. Part of the striatin-interacting phosphatase and kinase (STRIPAK) complexes. STRIPAK complexes have critical roles in protein (de)phosphorylation and are regulators of multiple signaling pathways including Hippo, MAPK, nuclear receptor and cytoskeleton remodeling. Different types of STRIPAK complexes are involved in a variety of biological processes such as cell growth, differentiation, apoptosis, metabolism and immune regulation. Key mediator of a quality checkpoint during transcription elongation as part of the Integrator-PP2A (INTAC) complex. The INTAC complex drives premature transcription termination of transcripts that are unfavorably configured for transcriptional elongation: within the INTAC complex, PPP2CA catalyzes dephosphorylation of the C-terminal domain (CTD) of Pol II subunit POLR2A/RPB1 and SUPT5H/SPT5, thereby preventing transcriptional elongation. This chain is Serine/threonine-protein phosphatase 2A catalytic subunit alpha isoform (PPP2CA), found in Homo sapiens (Human).